Consider the following 400-residue polypeptide: 11-beta-hydroxysteroid dehydrogenase type 2 (400 aa).

An NAD(+)-binding site is contributed by 82–111 (TRAVLITGCDTGFGKETAKKLDAMGFTVLA). S219 is a substrate binding site. Catalysis depends on Y232, which acts as the Proton acceptor. The disordered stretch occupies residues 378–400 (PGQPGPVHDTTQDPNPSPTVSAL). Residues 389–400 (QDPNPSPTVSAL) show a composition bias toward polar residues.

It belongs to the short-chain dehydrogenases/reductases (SDR) family. In terms of assembly, interacts with ligand-free cytoplasmic NR3C2. In terms of tissue distribution, highly expressed in kidney, adrenal gland and distal colon, and at much lower levels in lung, hypothalamus, hippocampus, and midbrain.

It localises to the microsome. The protein resides in the endoplasmic reticulum. The catalysed reaction is an 11beta-hydroxysteroid + NAD(+) = an 11-oxosteroid + NADH + H(+). The enzyme catalyses corticosterone + NAD(+) = 11-dehydrocorticosterone + NADH + H(+). It carries out the reaction 11beta,17beta-dihydroxyandrost-4-ene-3-one + NAD(+) = 17beta-hydroxyandrost-4-ene-3,11-dione + NADH + H(+). It catalyses the reaction 11beta-hydroxyandrost-4-ene-3,17-dione + NAD(+) = androst-4-ene-3,11,17-trione + NADH + H(+). It functions in the pathway steroid metabolism. With respect to regulation, inhibited by glycyrrhetinic acid. Induced by progesterone, through the Ihh signaling pathway. Catalyzes the conversion of biologically active 11beta-hydroxyglucocorticoids (11beta-hydroxysteroid) such as corticosterone, to inactive 11-ketoglucocorticoids (11-oxosteroid) such as 11-dehydrocorticosterone, in the presence of NAD(+). Functions as a dehydrogenase (oxidase), thereby decreasing the concentration of active glucocorticoids, thus protecting the nonselective mineralocorticoid receptor from occupation by glucocorticoids. Plays an important role in maintaining glucocorticoids balance during preimplantation and protects the fetus from excessive maternal corticosterone exposure. Catalyzes the oxidation of 11beta-hydroxytestosterone (11beta,17beta-dihydroxyandrost-4-ene-3-one) to 11-ketotestosterone (17beta-hydroxyandrost-4-ene-3,11-dione), a major bioactive androgen. Catalyzes the conversion of 11beta-hydroxyandrostenedione (11beta-hydroxyandrost-4-ene-3,17-dione) to 11-ketoandrostenedione (androst-4-ene-3,11,17-trione), which can be further metabolized to 11-ketotestosterone. Converts 7-beta-25-dihydroxycholesterol to 7-oxo-25-hydroxycholesterol in vitro. 7-beta-25-dihydroxycholesterol (not 7-oxo-25-hydroxycholesterol) acts as a ligand for the G-protein-coupled receptor (GPCR) Epstein-Barr virus-induced gene 2 (EBI2) and may thereby regulate immune cell migration. In Rattus norvegicus (Rat), this protein is 11-beta-hydroxysteroid dehydrogenase type 2 (Hsd11b2).